The following is a 227-amino-acid chain: Cytochrome c oxidase subunit 2 (227 aa).

At 1–14 (MAYPFQLGLQDATS) the chain is on the mitochondrial intermembrane side. A helical membrane pass occupies residues 15 to 45 (PIMEELTNFHDHTLMIVFLISTLVLYIISLM). Residues 46-59 (LTTKLTHTSTMDAQ) lie on the Mitochondrial matrix side of the membrane. The helical transmembrane segment at 60–87 (EVETIWTILPAVILILIALPSLRILYMM) threads the bilayer. At 88–227 (DEINNPALTV…YFEDWSASMI (140 aa)) the chain is on the mitochondrial intermembrane side. Positions 161, 196, 198, 200, 204, and 207 each coordinate Cu cation. Residue Glu-198 coordinates Mg(2+). Phosphotyrosine is present on Tyr-218.

The protein belongs to the cytochrome c oxidase subunit 2 family. As to quaternary structure, component of the cytochrome c oxidase (complex IV, CIV), a multisubunit enzyme composed of 14 subunits. The complex is composed of a catalytic core of 3 subunits MT-CO1, MT-CO2 and MT-CO3, encoded in the mitochondrial DNA, and 11 supernumerary subunits COX4I, COX5A, COX5B, COX6A, COX6B, COX6C, COX7A, COX7B, COX7C, COX8 and NDUFA4, which are encoded in the nuclear genome. The complex exists as a monomer or a dimer and forms supercomplexes (SCs) in the inner mitochondrial membrane with NADH-ubiquinone oxidoreductase (complex I, CI) and ubiquinol-cytochrome c oxidoreductase (cytochrome b-c1 complex, complex III, CIII), resulting in different assemblies (supercomplex SCI(1)III(2)IV(1) and megacomplex MCI(2)III(2)IV(2)). Found in a complex with TMEM177, COA6, COX18, COX20, SCO1 and SCO2. Interacts with TMEM177 in a COX20-dependent manner. Interacts with COX20. Interacts with COX16. The cofactor is Cu cation.

Its subcellular location is the mitochondrion inner membrane. It catalyses the reaction 4 Fe(II)-[cytochrome c] + O2 + 8 H(+)(in) = 4 Fe(III)-[cytochrome c] + 2 H2O + 4 H(+)(out). Its function is as follows. Component of the cytochrome c oxidase, the last enzyme in the mitochondrial electron transport chain which drives oxidative phosphorylation. The respiratory chain contains 3 multisubunit complexes succinate dehydrogenase (complex II, CII), ubiquinol-cytochrome c oxidoreductase (cytochrome b-c1 complex, complex III, CIII) and cytochrome c oxidase (complex IV, CIV), that cooperate to transfer electrons derived from NADH and succinate to molecular oxygen, creating an electrochemical gradient over the inner membrane that drives transmembrane transport and the ATP synthase. Cytochrome c oxidase is the component of the respiratory chain that catalyzes the reduction of oxygen to water. Electrons originating from reduced cytochrome c in the intermembrane space (IMS) are transferred via the dinuclear copper A center (CU(A)) of subunit 2 and heme A of subunit 1 to the active site in subunit 1, a binuclear center (BNC) formed by heme A3 and copper B (CU(B)). The BNC reduces molecular oxygen to 2 water molecules using 4 electrons from cytochrome c in the IMS and 4 protons from the mitochondrial matrix. The chain is Cytochrome c oxidase subunit 2 (MT-CO2) from Hybomys univittatus (Peter's striped mouse).